Reading from the N-terminus, the 201-residue chain is ATP-dependent Clp protease proteolytic subunit (201 aa).

Serine 100 functions as the Nucleophile in the catalytic mechanism. Histidine 125 is a catalytic residue.

The protein belongs to the peptidase S14 family. As to quaternary structure, component of the chloroplastic Clp protease core complex.

Its subcellular location is the plastid. The protein localises to the chloroplast stroma. It carries out the reaction Hydrolysis of proteins to small peptides in the presence of ATP and magnesium. alpha-casein is the usual test substrate. In the absence of ATP, only oligopeptides shorter than five residues are hydrolyzed (such as succinyl-Leu-Tyr-|-NHMec, and Leu-Tyr-Leu-|-Tyr-Trp, in which cleavage of the -Tyr-|-Leu- and -Tyr-|-Trp bonds also occurs).. In terms of biological role, cleaves peptides in various proteins in a process that requires ATP hydrolysis. Has a chymotrypsin-like activity. Plays a major role in the degradation of misfolded proteins. This Ranunculus macranthus (Large buttercup) protein is ATP-dependent Clp protease proteolytic subunit.